The following is a 300-amino-acid chain: Probable lipid kinase YegS-like (300 aa).

In terms of domain architecture, DAGKc spans 1 to 129 (MSKKALLILH…CDVIRVNNHY (129 aa)). ATP-binding positions include T38, 64 to 70 (GDGSVRD), and T92. Positions 210, 213, and 215 each coordinate Mg(2+). The active-site Proton acceptor is E272.

Belongs to the diacylglycerol/lipid kinase family. YegS lipid kinase subfamily. It depends on Mg(2+) as a cofactor. Requires Ca(2+) as cofactor.

The protein localises to the cytoplasm. Probably phosphorylates lipids; the in vivo substrate is unknown. The sequence is that of Probable lipid kinase YegS-like from Alcanivorax borkumensis (strain ATCC 700651 / DSM 11573 / NCIMB 13689 / SK2).